A 337-amino-acid polypeptide reads, in one-letter code: ATP-dependent 6-phosphofructokinase (337 aa).

Position 11 (Gly11) interacts with ATP. ADP is bound at residue 21-25; sequence RAVVR. ATP is bound by residues 72 to 73 and 102 to 105; these read RY and GDGS. Residue Asp103 participates in Mg(2+) binding. 125 to 127 is a substrate binding site; that stretch reads TID. The Proton acceptor role is filled by Asp127. Arg154 contacts ADP. Residues Arg162 and 169-171 each bind substrate; that span reads MGR. Residues 185–187, Arg212, and 214–216 contribute to the ADP site; these read GAD and KNH. Substrate is bound by residues Glu223, Arg245, and 251 to 254; that span reads HILR.

The protein belongs to the phosphofructokinase type A (PFKA) family. ATP-dependent PFK group I subfamily. Prokaryotic clade 'B1' sub-subfamily. In terms of assembly, homotetramer. It depends on Mg(2+) as a cofactor.

Its subcellular location is the cytoplasm. It carries out the reaction beta-D-fructose 6-phosphate + ATP = beta-D-fructose 1,6-bisphosphate + ADP + H(+). The protein operates within carbohydrate degradation; glycolysis; D-glyceraldehyde 3-phosphate and glycerone phosphate from D-glucose: step 3/4. Allosterically activated by ADP and other diphosphonucleosides, and allosterically inhibited by phosphoenolpyruvate. Its function is as follows. Catalyzes the phosphorylation of D-fructose 6-phosphate to fructose 1,6-bisphosphate by ATP, the first committing step of glycolysis. This Streptococcus equi subsp. equi (strain 4047) protein is ATP-dependent 6-phosphofructokinase.